The sequence spans 65 residues: Large ribosomal subunit protein bL31 (65 aa).

4 residues coordinate Zn(2+): Cys16, Cys18, Cys36, and Cys39.

The protein belongs to the bacterial ribosomal protein bL31 family. Type A subfamily. In terms of assembly, part of the 50S ribosomal subunit. Zn(2+) serves as cofactor.

Functionally, binds the 23S rRNA. In Desulfitobacterium hafniense (strain DSM 10664 / DCB-2), this protein is Large ribosomal subunit protein bL31.